A 687-amino-acid chain; its full sequence is Probable intron-encoded endonuclease aI3 (687 aa).

The COX1 exons 1 to 3 encoded stretch occupies residues 1–374 (MKQMSYVTRW…NASMDVAFHD (374 aa)). The next 10 helical transmembrane spans lie at 19 to 39 (IGMTYLGFGMLSAMMGTGMSV), 69 to 89 (LLMMFFFIMPVWMGAFGNFFL), 103 to 123 (LNNISFWCLPPALVCMVCSVL), 152 to 172 (AMFAMHLTSMSSLLGAMNFMV), 188 to 208 (PLFAWAMFLTAMLLLLSLPVL), 240 to 260 (LFWFFGHPEVYILMMPGFGVM), 273 to 293 (FGEMGMLYAMGSIGFLGFLVW), 315 to 335 (MVIAVPTGIKIFSWLATIYGG), 341 to 361 (VPMLFALGFLFLFTMGGLTGV), and 376 to 396 (IFIYYVSFFLYTLYNMYNNYT). The COX1 intron 3 encoded stretch occupies residues 375–687 (RIFIYYVSFF…KKESLMKFLK (313 aa)).

This sequence in the C-terminal section; belongs to the LAGLIDADG endonuclease family. It in the N-terminal section; belongs to the heme-copper respiratory oxidase family. In terms of processing, the mature protein may arise from proteolytic cleavage of an in-frame translation of COX1 exons 1 to 3 plus intron 3, containing the aI3 open reading frame.

It is found in the mitochondrion. It localises to the membrane. In terms of biological role, mitochondrial DNA endonuclease involved in intron homing. In Debaryomyces hansenii (strain ATCC 36239 / CBS 767 / BCRC 21394 / JCM 1990 / NBRC 0083 / IGC 2968) (Yeast), this protein is Probable intron-encoded endonuclease aI3 (aI3).